The sequence spans 328 residues: UPF0421 protein SAUSA300_1870 (328 aa).

4 helical membrane-spanning segments follow: residues 19–39, 61–81, 108–128, and 132–152; these read IAIF…IYAI, LPAT…FGDQ, VAVL…IFNF, and TLTA…VFPP.

It belongs to the UPF0421 family.

Its subcellular location is the cell membrane. The chain is UPF0421 protein SAUSA300_1870 from Staphylococcus aureus (strain USA300).